An 877-amino-acid polypeptide reads, in one-letter code: Phosphoenolpyruvate carboxylase (877 aa).

Catalysis depends on residues His-138 and Lys-544.

The protein belongs to the PEPCase type 1 family. Mg(2+) is required as a cofactor.

The catalysed reaction is oxaloacetate + phosphate = phosphoenolpyruvate + hydrogencarbonate. In terms of biological role, forms oxaloacetate, a four-carbon dicarboxylic acid source for the tricarboxylic acid cycle. The sequence is that of Phosphoenolpyruvate carboxylase from Vibrio parahaemolyticus serotype O3:K6 (strain RIMD 2210633).